Reading from the N-terminus, the 457-residue chain is Transmembrane protease serine 5 (457 aa).

A disordered region spans residues Met-1–Gly-21. Over Met-1–Cys-49 the chain is Cytoplasmic. The helical; Signal-anchor for type II membrane protein transmembrane segment at Ala-50 to Leu-70 threads the bilayer. Topologically, residues Tyr-71 to Leu-457 are extracellular. The SRCR domain maps to Phe-112 to Ser-207. 7 disulfide bridges follow: Cys-135/Cys-196, Cys-148/Cys-206, Cys-209/Cys-328, Cys-243/Cys-259, Cys-342/Cys-411, Cys-374/Cys-390, and Cys-401/Cys-429. N-linked (GlcNAc...) asparagine glycans are attached at residues Asn-163, Asn-170, and Asn-195. In terms of domain architecture, Peptidase S1 spans Ile-218–Gln-453. Catalysis depends on charge relay system residues His-258 and Asp-308. N-linked (GlcNAc...) asparagine glycans are attached at residues Asn-319 and Asn-375. Ser-405 functions as the Charge relay system in the catalytic mechanism.

This sequence belongs to the peptidase S1 family. As to expression, brain-specific. Predominantly expressed in neurons, in their axons, and at the synapses of motoneurons in the spinal cord.

It is found in the cell membrane. In terms of biological role, may play a role in hearing. The sequence is that of Transmembrane protease serine 5 (TMPRSS5) from Homo sapiens (Human).